A 244-amino-acid polypeptide reads, in one-letter code: Leucyl/phenylalanyl-tRNA--protein transferase (244 aa).

The segment at 1–22 is disordered; that stretch reads MHSQPYLLSPAPNNTPFPPAEH.

This sequence belongs to the L/F-transferase family.

It localises to the cytoplasm. The enzyme catalyses N-terminal L-lysyl-[protein] + L-leucyl-tRNA(Leu) = N-terminal L-leucyl-L-lysyl-[protein] + tRNA(Leu) + H(+). It catalyses the reaction N-terminal L-arginyl-[protein] + L-leucyl-tRNA(Leu) = N-terminal L-leucyl-L-arginyl-[protein] + tRNA(Leu) + H(+). It carries out the reaction L-phenylalanyl-tRNA(Phe) + an N-terminal L-alpha-aminoacyl-[protein] = an N-terminal L-phenylalanyl-L-alpha-aminoacyl-[protein] + tRNA(Phe). Functions in the N-end rule pathway of protein degradation where it conjugates Leu, Phe and, less efficiently, Met from aminoacyl-tRNAs to the N-termini of proteins containing an N-terminal arginine or lysine. The polypeptide is Leucyl/phenylalanyl-tRNA--protein transferase (Xylella fastidiosa (strain M12)).